We begin with the raw amino-acid sequence, 1154 residues long: Serine-aspartate repeat-containing protein E (1154 aa).

Residues 1-52 (MINRDNKKAITKKGMISNRLNKFSIRKYTVGTASILVGTTLIFGLGNQEAKA) form the signal peptide. The YSIRK-G/S signaling motif motif lies at 23 to 34 (FSIRKYTVGTAS). The tract at residues 53–606 (AENTSTENAK…GDGTVKPEEK (554 aa)) is ligand binding A region. The disordered stretch occupies residues 54–230 (ENTSTENAKQ…SKEELKNNPE (177 aa)). Over residues 61-75 (AKQDDATTSDNKEVV) the composition is skewed to basic and acidic residues. A compositionally biased stretch (low complexity) spans 77-90 (ETENNSTTENNSTN). The span at 92–108 (IKKETNTDSQPEAKKES) shows a compositional bias: basic and acidic residues. Over residues 118 to 129 (NNVTATTETKPQ) the composition is skewed to polar residues. The span at 130 to 145 (NIEKENVKPSTDKTAT) shows a compositional bias: basic and acidic residues. Over residues 166–178 (TTKPSTSEPSTSE) the composition is skewed to low complexity. A compositionally biased stretch (polar residues) spans 179–212 (IQTKPTTPQESTNIENSQPQPTPSKVDNQVTDAT). The span at 221-230 (SKEELKNNPE) shows a compositional bias: basic and acidic residues. 3 CNA-B domains span residues 607-719 (LYKI…YKEP), 720-829 (KYNL…YKTP), and 830-940 (KYSL…EEDT). The tract at residues 904-1129 (VTNTTEDDKD…TGSENNGSNN (226 aa)) is disordered. Acidic residues-rich tracts occupy residues 908 to 918 (TEDDKDADGGE) and 935 to 1093 (YFEE…DSDS). The short motif at 1117 to 1121 (LPETG) is the LPXTG sorting signal element. Thr1120 is subject to Pentaglycyl murein peptidoglycan amidated threonine. A propeptide spans 1121-1154 (GSENNGSNNATLFGGLFAALGSLLLFGRRKKQNK) (removed by sortase).

This sequence belongs to the serine-aspartate repeat-containing protein (SDr) family. Interacts with host complement factor H/CFAH (via C-terminus). Interacts with host complement regulator C4BPA.

The protein localises to the secreted. It is found in the cell wall. In terms of biological role, cell surface-associated calcium-binding protein which plays an important role in adhesion and pathogenesis. Contributes to the resistance to killing by innate immune components in blood and thus attenuates bacterial clearance by interacting with host complement factor H/CFAH and modulating its activity. Also inhibits bacterial opsonization and killing by interacting with host complement regulator C4BPA and thus inhibiting classical complement pathway activation. In Staphylococcus aureus (strain USA300), this protein is Serine-aspartate repeat-containing protein E (sdrE).